A 396-amino-acid polypeptide reads, in one-letter code: Alanine racemase (396 aa).

Lys-46 serves as the catalytic Proton acceptor; specific for D-alanine. N6-(pyridoxal phosphate)lysine is present on Lys-46. Arg-145 contributes to the substrate binding site. The Proton acceptor; specific for L-alanine role is filled by Tyr-280. Met-328 serves as a coordination point for substrate.

The protein belongs to the alanine racemase family. Pyridoxal 5'-phosphate is required as a cofactor.

It carries out the reaction L-alanine = D-alanine. It participates in amino-acid biosynthesis; D-alanine biosynthesis; D-alanine from L-alanine: step 1/1. Functionally, catalyzes the interconversion of L-alanine and D-alanine. May also act on other amino acids. The polypeptide is Alanine racemase (alr) (Brucella ovis (strain ATCC 25840 / 63/290 / NCTC 10512)).